A 1523-amino-acid chain; its full sequence is MSWSSIKLSRLPDATISVWGHTATISGEKDIVIFGGFDFCIEKPTNTTYILHTSQTNGLTKPSVSGSLPPPIYGHSSTQVGRKMFVFGGSLQDNVQVNDMYQFNTSNYSWSKPRPMGEPPIPRYGHSASLIYDNYILIFGGNNTKSSKPLNDIHIFNTERNSWTKPSSNSSTGEIIFNPHDISPRSSTTTPTHQSVNGSNSNSSSSSRVRSATISSHNNSPIVMPLNNNNNNNNNSNNSNNSNNNGGGSPMTTPPTLQQLHLSQLMANGIGMGGSISNGNSDSPPLTPSMMALESSMLNGFKSPLSLSQRLLRSGFRSSPPSARYFHSCSVINGKAFIFGGYNGTTLLNDLYILNIESMEWICPHTKGDLPTPRAGHTSIAIGSRLFIFGGTIEGDPSSSNAHCDNDLYMFEPELNYWTLLKTSGTLPSPRTGHVCLPISSKILIIGGSDAILNNKLKLSNTYHSLETLKLDFSHYSRGGSGGGSNNNIIIHPITSSNSTSSNSIITNYLPHLKPRSSSNSGGGGGSITNTPTTSSLHIKDNSASPSPLTPRSIARNSPKSSIFHDNINNNSNNNLLNTLQEASKFELSPGTPKSIRGIDSLSSVSLTQSIDRNGGSGGGSGGGNGVVSNDRGEFLRHYTTQSILINKNNNNNNNNNSGGSNLSISSNSGSNNSINSNDGLVLQCSTPLCIKKYNSLKDSYLELKQKYQEEREKRLELEKELERYRLSSPITSASSLVDTLSSPNNLNINSNNSTTTTTTTTTTTTTPIPLSTSNNNNNNNNNSTLTVQDQVTTSKQILEIYEDIYNLWGYYEKRVKWKENTEKEANQQLEVIKSKIDLFTSMVGLENHFSFNDDTKSCCSENINGDHNQQQQQQQQQNPQFQIDDNISETNSQISEPALIHETLTPRKSRENSVHHSRSVSNPIPLLSQIVKQSKSGDSTLTVPQQLHSSHNNLIQLASISTPQKPPQQPQQQQQQQPPQENGKEPSKSTQKIFKLLISKKNRASGHFKLSSSNESSNSEETTPTFSNNPNLINDEDDDSQQHQQQTNIGSNSISNINTSNSTTSLSSSVSSTSLQTQEEFEASERSKQKKRLGKALKQMINKDRQLKETAAAALAVSNSNGNLGGGGGGGSINGTTNVSGNGANNLGGLVLTSDKEKEKLEKEREKSERIEREKQEKEREKLEKEREKSERIEREKLEKAEKERLEKEKIEKEKLEKKHKKIKGLFGAKSSNKESLPFRRDVIEKVINHLRENSLDTEGIFRLSGNMESVRGIVKSFAHGEPNLSFEVHNISNALKHYLRSLDPPLIPYEFFLMLLDARKNEDAETIRNIFWKIPSDNRVVLTLLVDLMVKISENSNVNKMNSKNLSIVFGPTILKPRTPTLDRMALMTETQLQCGIIQTFIEDFHYIFSEFPTSGPKSFLGDDDYDSSSFGSNNTPSSHSPHSSSPTLNPAVTTTTTTTTTTNTTTTTNTTTTPTSATISPNIIQTNNCDSALCTPTTLSSTAAIIQSNNNNRTDSNRNN.

Kelch repeat units lie at residues 30–76 (DIVI…YGHS), 83–133 (KMFV…LIYD), and 135–184 (YILI…DISP). Composition is skewed to polar residues over residues 161–173 (NSWTKPSSNSSTG) and 184–194 (PRSSTTTPTHQ). Residues 161 to 256 (NSWTKPSSNS…GGSPMTTPPT (96 aa)) form a disordered region. Low complexity predominate over residues 195 to 211 (SVNGSNSNSSSSSRVRS). The segment covering 212–221 (ATISSHNNSP) has biased composition (polar residues). Low complexity predominate over residues 227-244 (NNNNNNNNNSNNSNNSNN). Kelch repeat units follow at residues 335-384 (KAFI…AIGS), 386-441 (LFIF…PISS), and 443-496 (ILII…PITS). Disordered stretches follow at residues 510-569 (LPHL…DNIN), 609-631 (QSIDRNGGSGGGSGGGNGVVSND), and 647-671 (NKNNNNNNNNNSGGSNLSISSNSGS). The segment covering 615–626 (GGSGGGSGGGNG) has biased composition (gly residues). Residues 690–729 (CIKKYNSLKDSYLELKQKYQEEREKRLELEKELERYRLSS) are a coiled coil. Residues 748–786 (NINSNNSTTTTTTTTTTTTTPIPLSTSNNNNNNNNNSTL) form a disordered region. Positions 812 to 840 (YEKRVKWKENTEKEANQQLEVIKSKIDLF) form a coiled coil. Disordered regions lie at residues 861-881 (SENINGDHNQQQQQQQQQNPQ), 905-927 (LTPRKSRENSVHHSRSVSNPIPL), 963-991 (TPQKPPQQPQQQQQQQPPQENGKEPSKST), 1006-1096 (SGHF…RLGK), and 1143-1194 (NGAN…SERI). Positions 870–881 (QQQQQQQQQNPQ) are enriched in low complexity. Basic and acidic residues predominate over residues 905-915 (LTPRKSRENSV). 4 stretches are compositionally biased toward low complexity: residues 971 to 981 (PQQQQQQQPPQ), 1012 to 1030 (SSSNESSNSEETTPTFSNN), 1043 to 1079 (QHQQQTNIGSNSISNINTSNSTTSLSSSVSSTSLQTQ), and 1143 to 1153 (NGANNLGGLVL). Residues 1151–1228 (LVLTSDKEKE…KKHKKIKGLF (78 aa)) are a coiled coil. Residues 1155–1194 (SDKEKEKLEKEREKSERIEREKQEKEREKLEKEREKSERI) show a composition bias toward basic and acidic residues. In terms of domain architecture, Rho-GAP spans 1233 to 1411 (SNKESLPFRR…TFIEDFHYIF (179 aa)). Residues 1425-1482 (DDDYDSSSFGSNNTPSSHSPHSSSPTLNPAVTTTTTTTTTTNTTTTTNTTTTPTSATI) form a disordered region. The span at 1430-1476 (SSSFGSNNTPSSHSPHSSSPTLNPAVTTTTTTTTTTNTTTTTNTTTT) shows a compositional bias: low complexity.

The protein resides in the cytoplasm. Functionally, rho GTPase-activating protein involved in the signal transduction pathway. This is Rho GTPase-activating protein gacHH (gacHH) from Dictyostelium discoideum (Social amoeba).